The sequence spans 156 residues: Small ribosomal subunit protein uS7 (156 aa).

It belongs to the universal ribosomal protein uS7 family. As to quaternary structure, part of the 30S ribosomal subunit. Contacts proteins S9 and S11.

In terms of biological role, one of the primary rRNA binding proteins, it binds directly to 16S rRNA where it nucleates assembly of the head domain of the 30S subunit. Is located at the subunit interface close to the decoding center, probably blocks exit of the E-site tRNA. The polypeptide is Small ribosomal subunit protein uS7 (Shigella dysenteriae serotype 1 (strain Sd197)).